The sequence spans 278 residues: Sulfur carrier protein FdhD (278 aa).

The active-site Cysteine persulfide intermediate is the Cys-121. 260–265 serves as a coordination point for Mo-bis(molybdopterin guanine dinucleotide); sequence FCKPGR.

This sequence belongs to the FdhD family.

Its subcellular location is the cytoplasm. Required for formate dehydrogenase (FDH) activity. Acts as a sulfur carrier protein that transfers sulfur from IscS to the molybdenum cofactor prior to its insertion into FDH. The sequence is that of Sulfur carrier protein FdhD from Salmonella choleraesuis (strain SC-B67).